A 177-amino-acid chain; its full sequence is ATP synthase subunit b (177 aa).

A helical transmembrane segment spans residues 15 to 35 (GISGGTIIYQLLMFIILLALL).

The protein belongs to the ATPase B chain family. As to quaternary structure, F-type ATPases have 2 components, F(1) - the catalytic core - and F(0) - the membrane proton channel. F(1) has five subunits: alpha(3), beta(3), gamma(1), delta(1), epsilon(1). F(0) has three main subunits: a(1), b(2) and c(10-14). The alpha and beta chains form an alternating ring which encloses part of the gamma chain. F(1) is attached to F(0) by a central stalk formed by the gamma and epsilon chains, while a peripheral stalk is formed by the delta and b chains.

Its subcellular location is the cell membrane. Its function is as follows. F(1)F(0) ATP synthase produces ATP from ADP in the presence of a proton or sodium gradient. F-type ATPases consist of two structural domains, F(1) containing the extramembraneous catalytic core and F(0) containing the membrane proton channel, linked together by a central stalk and a peripheral stalk. During catalysis, ATP synthesis in the catalytic domain of F(1) is coupled via a rotary mechanism of the central stalk subunits to proton translocation. Functionally, component of the F(0) channel, it forms part of the peripheral stalk, linking F(1) to F(0). This chain is ATP synthase subunit b, found in Geobacillus kaustophilus (strain HTA426).